The primary structure comprises 281 residues: Putative phosphoenolpyruvate synthase regulatory protein (281 aa).

ADP is bound at residue 161-168 (GVSRSGKT).

This sequence belongs to the pyruvate, phosphate/water dikinase regulatory protein family. PSRP subfamily.

It carries out the reaction [pyruvate, water dikinase] + ADP = [pyruvate, water dikinase]-phosphate + AMP + H(+). The catalysed reaction is [pyruvate, water dikinase]-phosphate + phosphate + H(+) = [pyruvate, water dikinase] + diphosphate. Bifunctional serine/threonine kinase and phosphorylase involved in the regulation of the phosphoenolpyruvate synthase (PEPS) by catalyzing its phosphorylation/dephosphorylation. This chain is Putative phosphoenolpyruvate synthase regulatory protein, found in Herminiimonas arsenicoxydans.